A 339-amino-acid chain; its full sequence is MANTKKYFLESVSPLEYAQKKFQGNLRSVNWNLVDDEKDLEVWNRITQNFWLPEKIPVSNDIPSWKQLSKEWQDLITKTFTGLTLLDTIQATIGDIKQIDYALTDHEQVIYANFAFMVGVHARSYGTIFSTLCTSEQITEAHEWVVKTESLQKRAKALIPYYTGKDPLKSKVAAALMPGFLLYGGFYLPFYLSSRKQLPNTSDIIRLILRDKVIHNYYSGYKFQRKVEKMSKEKQAEMKRFVFDLMYELIELEKAYLKELYEGFGIVEDAIKFSIYNAGKFLQNLGYDSPFTEEETRIKPEIFAQLSARADENHDFFSGNGSSYVMGISEETEDKDWDF.

Asp-87 and His-121 together coordinate Fe cation. Tyr-125 is a catalytic residue. His-215 provides a ligand contact to Fe cation.

It belongs to the ribonucleoside diphosphate reductase small chain family. As to quaternary structure, tetramer of two alpha and two beta subunits. The cofactor is Fe cation.

It catalyses the reaction a 2'-deoxyribonucleoside 5'-diphosphate + [thioredoxin]-disulfide + H2O = a ribonucleoside 5'-diphosphate + [thioredoxin]-dithiol. In terms of biological role, provides the precursors necessary for DNA synthesis. Catalyzes the biosynthesis of deoxyribonucleotides from the corresponding ribonucleotides. The chain is Ribonucleoside-diphosphate reductase subunit beta (nrdF) from Mycoplasma pneumoniae (strain ATCC 29342 / M129 / Subtype 1) (Mycoplasmoides pneumoniae).